A 108-amino-acid polypeptide reads, in one-letter code: Protein SMALL AUXIN UP-REGULATED RNA 51 (108 aa).

The protein belongs to the ARG7 family. As to expression, expressed in organ primordia. Hardly observed in leaves.

It localises to the cell membrane. Provide a mechanistic link between auxin and plasma membrane H(+)-ATPases (PM H(+)-ATPases, e.g. AHA1 and AHA2), and triggers PM H(+)-ATPases activity by promoting phosphorylation of their C-terminal autoinhibitory domain as a result of PP2C-D subfamily of type 2C phosphatases inhibition, thus leading to the acidification of the apoplast and the facilitation of solutes and water uptake to drive cell expansion. Triggers plant growth probably by promoting cell elongation. Regulates branch angles and bending. The protein is Protein SMALL AUXIN UP-REGULATED RNA 51 of Arabidopsis thaliana (Mouse-ear cress).